A 454-amino-acid polypeptide reads, in one-letter code: Pup--protein ligase (454 aa).

Residue Glu9 coordinates Mg(2+). ATP is bound at residue Arg53. Residue Tyr55 participates in Mg(2+) binding. The active-site Proton acceptor is Asp57. Glu63 is a binding site for Mg(2+). Thr66 and Trp420 together coordinate ATP.

The protein belongs to the Pup ligase/Pup deamidase family. Pup-conjugating enzyme subfamily.

It catalyses the reaction ATP + [prokaryotic ubiquitin-like protein]-L-glutamate + [protein]-L-lysine = ADP + phosphate + N(6)-([prokaryotic ubiquitin-like protein]-gamma-L-glutamyl)-[protein]-L-lysine.. The protein operates within protein degradation; proteasomal Pup-dependent pathway. It functions in the pathway protein modification; protein pupylation. In terms of biological role, catalyzes the covalent attachment of the prokaryotic ubiquitin-like protein modifier Pup to the proteasomal substrate proteins, thereby targeting them for proteasomal degradation. This tagging system is termed pupylation. The ligation reaction involves the side-chain carboxylate of the C-terminal glutamate of Pup and the side-chain amino group of a substrate lysine. This Paenarthrobacter aurescens (strain TC1) protein is Pup--protein ligase.